A 268-amino-acid polypeptide reads, in one-letter code: Undecaprenyl-diphosphatase 1 (268 aa).

The next 7 helical transmembrane spans lie at Ser5 to Ser25, Gly43 to Phe63, Leu84 to Ile104, Val107 to Leu127, Ala184 to Leu204, Leu218 to Leu238, and Ala247 to Ile267.

This sequence belongs to the UppP family.

The protein resides in the cell inner membrane. It carries out the reaction di-trans,octa-cis-undecaprenyl diphosphate + H2O = di-trans,octa-cis-undecaprenyl phosphate + phosphate + H(+). Its function is as follows. Catalyzes the dephosphorylation of undecaprenyl diphosphate (UPP). Confers resistance to bacitracin. This chain is Undecaprenyl-diphosphatase 1, found in Agrobacterium fabrum (strain C58 / ATCC 33970) (Agrobacterium tumefaciens (strain C58)).